A 238-amino-acid chain; its full sequence is Pyridoxine 5'-phosphate synthase (238 aa).

3-amino-2-oxopropyl phosphate-binding residues include asparagine 7 and arginine 18. Histidine 43 acts as the Proton acceptor in catalysis. Positions 45 and 50 each coordinate 1-deoxy-D-xylulose 5-phosphate. Glutamate 70 functions as the Proton acceptor in the catalytic mechanism. Threonine 100 is a 1-deoxy-D-xylulose 5-phosphate binding site. Histidine 190 acts as the Proton donor in catalysis. Residues aspartate 191 and 213-214 each bind 3-amino-2-oxopropyl phosphate; that span reads GH.

It belongs to the PNP synthase family. In terms of assembly, homooctamer; tetramer of dimers.

It is found in the cytoplasm. It carries out the reaction 3-amino-2-oxopropyl phosphate + 1-deoxy-D-xylulose 5-phosphate = pyridoxine 5'-phosphate + phosphate + 2 H2O + H(+). The protein operates within cofactor biosynthesis; pyridoxine 5'-phosphate biosynthesis; pyridoxine 5'-phosphate from D-erythrose 4-phosphate: step 5/5. Its function is as follows. Catalyzes the complicated ring closure reaction between the two acyclic compounds 1-deoxy-D-xylulose-5-phosphate (DXP) and 3-amino-2-oxopropyl phosphate (1-amino-acetone-3-phosphate or AAP) to form pyridoxine 5'-phosphate (PNP) and inorganic phosphate. This Porphyromonas gingivalis (strain ATCC 33277 / DSM 20709 / CIP 103683 / JCM 12257 / NCTC 11834 / 2561) protein is Pyridoxine 5'-phosphate synthase.